The sequence spans 234 residues: Phosphoribosylaminoimidazole-succinocarboxamide synthase (234 aa).

It belongs to the SAICAR synthetase family.

It catalyses the reaction 5-amino-1-(5-phospho-D-ribosyl)imidazole-4-carboxylate + L-aspartate + ATP = (2S)-2-[5-amino-1-(5-phospho-beta-D-ribosyl)imidazole-4-carboxamido]succinate + ADP + phosphate + 2 H(+). It functions in the pathway purine metabolism; IMP biosynthesis via de novo pathway; 5-amino-1-(5-phospho-D-ribosyl)imidazole-4-carboxamide from 5-amino-1-(5-phospho-D-ribosyl)imidazole-4-carboxylate: step 1/2. This Streptococcus agalactiae serotype V (strain ATCC BAA-611 / 2603 V/R) protein is Phosphoribosylaminoimidazole-succinocarboxamide synthase.